The following is an 815-amino-acid chain: Protein-glutamine gamma-glutamyltransferase K (815 aa).

The span at 1 to 10 (MEGPRSDVGR) shows a compositional bias: basic and acidic residues. Disordered stretches follow at residues 1-48 (MEGP…SFWA) and 62-101 (DDWG…AAGD). A compositionally biased stretch (pro residues) spans 16 to 25 (WQPPTTPSPE). A Phosphothreonine modification is found at Thr21. Residues Ser23, Ser71, Ser83, Ser91, and Ser94 each carry the phosphoserine modification. The segment covering 66-78 (PEPSGSRSRGTSS) has biased composition (low complexity). Basic and acidic residues predominate over residues 79–91 (RGRDSRGGRRPES). Catalysis depends on residues Cys376, His435, and Asp458. Residues Asn498, Asp500, Glu547, and Glu552 each coordinate Ca(2+). Residues 791–815 (GSGFSDAGGDSRSGENIPMAYRGGA) are disordered. Ser803 carries the post-translational modification Phosphoserine.

This sequence belongs to the transglutaminase superfamily. Transglutaminase family. As to quaternary structure, interacts with PLAAT4. It depends on Ca(2+) as a cofactor. Post-translationally, tyrosine-phosphorylated. In terms of processing, palmitoylated. The membrane anchorage region possesses a cluster of five cysteines within which fatty acid(s) may become thioester-linked. It is subject to phorbol ester-stimulated phosphorylation and is hypersensitive to proteolysis, which releases the enzyme in a soluble form. As to expression, expressed in large amounts in epithelial tissues (lung, liver and kidney).

The protein localises to the membrane. It catalyses the reaction L-glutaminyl-[protein] + L-lysyl-[protein] = [protein]-L-lysyl-N(6)-5-L-glutamyl-[protein] + NH4(+). In terms of biological role, catalyzes the cross-linking of proteins and the conjugation of polyamines to proteins. Responsible for cross-linking epidermal proteins during formation of the stratum corneum. Involved in cell proliferation. The protein is Protein-glutamine gamma-glutamyltransferase K (Tgm1) of Mus musculus (Mouse).